The sequence spans 119 residues: Large ribosomal subunit protein bL20 (119 aa).

It belongs to the bacterial ribosomal protein bL20 family.

Functionally, binds directly to 23S ribosomal RNA and is necessary for the in vitro assembly process of the 50S ribosomal subunit. It is not involved in the protein synthesizing functions of that subunit. This Granulibacter bethesdensis (strain ATCC BAA-1260 / CGDNIH1) protein is Large ribosomal subunit protein bL20.